The following is a 103-amino-acid chain: Large ribosomal subunit protein mL41 (103 aa).

This sequence belongs to the mitochondrion-specific ribosomal protein mL41 family. Component of the mitochondrial large ribosomal subunit (mt-LSU). Mature N.crassa 74S mitochondrial ribosomes consist of a small (37S) and a large (54S) subunit. The 37S small subunit contains a 16S ribosomal RNA (16S mt-rRNA) and 32 different proteins. The 54S large subunit contains a 23S rRNA (23S mt-rRNA) and 42 different proteins.

It is found in the mitochondrion. Component of the mitochondrial ribosome (mitoribosome), a dedicated translation machinery responsible for the synthesis of mitochondrial genome-encoded proteins, including at least some of the essential transmembrane subunits of the mitochondrial respiratory chain. The mitoribosomes are attached to the mitochondrial inner membrane and translation products are cotranslationally integrated into the membrane. The sequence is that of Large ribosomal subunit protein mL41 (mrpl27) from Neurospora crassa (strain ATCC 24698 / 74-OR23-1A / CBS 708.71 / DSM 1257 / FGSC 987).